The chain runs to 143 residues: Large ribosomal subunit protein uL15 (143 aa).

Belongs to the universal ribosomal protein uL15 family. In terms of assembly, part of the 50S ribosomal subunit.

Its function is as follows. Binds to the 23S rRNA. The protein is Large ribosomal subunit protein uL15 of Methanococcus aeolicus (strain ATCC BAA-1280 / DSM 17508 / OCM 812 / Nankai-3).